Reading from the N-terminus, the 68-residue chain is uncharacterized protein (68 aa).

This is an uncharacterized protein from Invertebrate iridescent virus 3 (IIV-3).